We begin with the raw amino-acid sequence, 418 residues long: Serine hydroxymethyltransferase (418 aa).

Residues L120 and 124-126 (GHL) contribute to the (6S)-5,6,7,8-tetrahydrofolate site. At K229 the chain carries N6-(pyridoxal phosphate)lysine. Residue 353–355 (SPF) participates in (6S)-5,6,7,8-tetrahydrofolate binding.

It belongs to the SHMT family. As to quaternary structure, homodimer. Pyridoxal 5'-phosphate serves as cofactor.

The protein localises to the cytoplasm. It carries out the reaction (6R)-5,10-methylene-5,6,7,8-tetrahydrofolate + glycine + H2O = (6S)-5,6,7,8-tetrahydrofolate + L-serine. It functions in the pathway one-carbon metabolism; tetrahydrofolate interconversion. The protein operates within amino-acid biosynthesis; glycine biosynthesis; glycine from L-serine: step 1/1. Its function is as follows. Catalyzes the reversible interconversion of serine and glycine with tetrahydrofolate (THF) serving as the one-carbon carrier. This reaction serves as the major source of one-carbon groups required for the biosynthesis of purines, thymidylate, methionine, and other important biomolecules. Also exhibits THF-independent aldolase activity toward beta-hydroxyamino acids, producing glycine and aldehydes, via a retro-aldol mechanism. The protein is Serine hydroxymethyltransferase of Psychrobacter arcticus (strain DSM 17307 / VKM B-2377 / 273-4).